The sequence spans 236 residues: Probable transcriptional activator protein TraR (236 aa).

In terms of domain architecture, HTH luxR-type spans 169–234 (VLNPKQMLSP…QLVAIAKDRG (66 aa)). The H-T-H motif DNA-binding region spans 193–212 (ASVTANLTGINARTVQHYLD).

The protein belongs to the autoinducer-regulated transcriptional regulatory protein family.

Positive regulation of conjugal transfer. TraR activates target genes in the presence of AAI and also activates traR and traI themselves. The sequence is that of Probable transcriptional activator protein TraR (traR) from Sinorhizobium fredii (strain NBRC 101917 / NGR234).